Reading from the N-terminus, the 233-residue chain is Large ribosomal subunit protein uL1 (233 aa).

Belongs to the universal ribosomal protein uL1 family. Part of the 50S ribosomal subunit.

Its function is as follows. Binds directly to 23S rRNA. The L1 stalk is quite mobile in the ribosome, and is involved in E site tRNA release. Protein L1 is also a translational repressor protein, it controls the translation of the L11 operon by binding to its mRNA. The chain is Large ribosomal subunit protein uL1 from Thermotoga petrophila (strain ATCC BAA-488 / DSM 13995 / JCM 10881 / RKU-1).